Reading from the N-terminus, the 130-residue chain is Protein ApaG (130 aa).

One can recognise an ApaG domain in the interval 3 to 127; it reads EHESCGVRIS…FSLDRPSDRL (125 aa).

The polypeptide is Protein ApaG (Maricaulis maris (strain MCS10) (Caulobacter maris)).